We begin with the raw amino-acid sequence, 188 residues long: VQ motif-containing protein 18 (188 aa).

Disordered stretches follow at residues 1–20, 58–92, and 157–188; these read MEIT…VSMN, LTGK…HQPV, and GFIF…HNSS. Residues 51-60 carry the VQ motif; the sequence is FRSLVQSLTG. Residues 161 to 179 are compositionally biased toward low complexity; sequence NNNNNNNNNNNNNNNNNTN.

Its subcellular location is the nucleus. Functionally, may function as positive regulator of plant growth. The polypeptide is VQ motif-containing protein 18 (Arabidopsis thaliana (Mouse-ear cress)).